A 180-amino-acid chain; its full sequence is Transcription factor HES-7.1-A (180 aa).

Residues 13-70 (HRKLLKPLVEKRRRERINNSLEKLRIFLFQTLKSEKLKNPKVEKAEILECTVQFLQSR) enclose the bHLH domain. The Orange domain maps to 84-116 (YQSGFQHCLETTLHFMNSKPDMNGVTKELLSHQ). The WRPW motif signature appears at 176 to 179 (WRPW).

In terms of assembly, transcription repression requires formation of a complex with a corepressor protein of the Groucho/TLE family. As to expression, expressed in the presumptive midbrain-hindbrain boundary (MHB) as early as the early gastrula stage (stage 10.5). Expression in the MHB continues through to tailbud stage. Also transiently expressed in the eye anlage at late neurula stage.

Its subcellular location is the nucleus. Its function is as follows. Transcriptional repressor. Represses transcription from both N box- and E box-containing promoters. Demarcates the prospective midbrain-hindbrain boundary (MHB) region in the neuroectoderm in early gastrulae embryos by repressing transcription of a number of target genes. This is Transcription factor HES-7.1-A (hes7.1-a) from Xenopus laevis (African clawed frog).